The sequence spans 264 residues: Cytosolic Fe-S cluster assembly factor Nubp2 homolog (264 aa).

14–21 is a binding site for ATP; the sequence is GKGGVGKS. Positions 188 and 191 each coordinate [4Fe-4S] cluster.

The protein belongs to the Mrp/NBP35 ATP-binding proteins family. NUBP2/CFD1 subfamily. Heterotetramer of 2 Nubp1 and 2 Nubp2 chains. The cofactor is [4Fe-4S] cluster.

The protein resides in the cytoplasm. In terms of biological role, component of the cytosolic iron-sulfur (Fe/S) protein assembly (CIA) machinery. Required for maturation of extramitochondrial Fe-S proteins. The Nubp1-Nubp2 heterotetramer forms a Fe-S scaffold complex, mediating the de novo assembly of an Fe-S cluster and its transfer to target apoproteins. The protein is Cytosolic Fe-S cluster assembly factor Nubp2 homolog of Drosophila grimshawi (Hawaiian fruit fly).